The primary structure comprises 662 residues: DNA ligase (662 aa).

NAD(+) contacts are provided by residues 34 to 38, 83 to 84, and E113; these read DYDYD and SI. Catalysis depends on K115, which acts as the N6-AMP-lysine intermediate. Residues R136, E172, K286, and K310 each coordinate NAD(+). Zn(2+)-binding residues include C404, C407, C422, and C427. Residues 583–662 enclose the BRCT domain; sequence RESSSCLGKT…NDLLKILYPN (80 aa).

Belongs to the NAD-dependent DNA ligase family. LigA subfamily. Requires Mg(2+) as cofactor. Mn(2+) serves as cofactor.

It carries out the reaction NAD(+) + (deoxyribonucleotide)n-3'-hydroxyl + 5'-phospho-(deoxyribonucleotide)m = (deoxyribonucleotide)n+m + AMP + beta-nicotinamide D-nucleotide.. In terms of biological role, DNA ligase that catalyzes the formation of phosphodiester linkages between 5'-phosphoryl and 3'-hydroxyl groups in double-stranded DNA using NAD as a coenzyme and as the energy source for the reaction. It is essential for DNA replication and repair of damaged DNA. The polypeptide is DNA ligase (Chlamydia caviae (strain ATCC VR-813 / DSM 19441 / 03DC25 / GPIC) (Chlamydophila caviae)).